Consider the following 976-residue polypeptide: 5'-3' exoribonuclease 2 homolog (976 aa).

The segment at 264-281 adopts a CCHC-type zinc-finger fold; the sequence is RACELCGQYGHELKECRG. Residues 411–420 are compositionally biased toward basic and acidic residues; the sequence is DEERFKENQK. Residues 411-442 are disordered; that stretch reads DEERFKENQKNKKARMQQYGRGRGGRGRGRGQ. The tract at residues 535 to 788 is interaction with paxt-1; it reads DIRLYESGWK…GICVLYEDPE (254 aa). The segment at 815–976 is disordered; that stretch reads WNERRDGRFN…GGYQGNSSWR (162 aa). Residues 856–866 show a composition bias toward low complexity; that stretch reads DRQGGNDNYRG.

The protein belongs to the 5'-3' exonuclease family. XRN2/RAT1 subfamily. Interacts with paxt-1 (via N-terminus); the interaction is direct and results in stabilization of xrn-2 in the complex.

It is found in the nucleus. Its function is as follows. Possesses 5'-&gt;3' exoribonuclease activity. Plays a role in maintenance of steady-state concentration and turnover of microRNAs (miRNA) by degradation of mature miRNA. Degradation role is enhanced when in complex with paxt-1. Partially redundant to xrn-1 in miRNA guide strand degradation. Implicated in differential regulation of mRNAs such as let-7 by controlling the accumulation of mature miRNA. Positively regulates molting of the pharyngeal cuticle. The sequence is that of 5'-3' exoribonuclease 2 homolog from Caenorhabditis briggsae.